Consider the following 131-residue polypeptide: Small ribosomal subunit protein uS12 (131 aa).

The residue at position 89 (Asp-89) is a 3-methylthioaspartic acid. The interval 106–131 is disordered; the sequence is GVDGRKQGRSKYGAKKAKVAKTASAK. Residues 112–124 show a composition bias toward basic residues; that stretch reads QGRSKYGAKKAKV.

The protein belongs to the universal ribosomal protein uS12 family. As to quaternary structure, part of the 30S ribosomal subunit. Contacts proteins S8 and S17. May interact with IF1 in the 30S initiation complex.

Its function is as follows. With S4 and S5 plays an important role in translational accuracy. In terms of biological role, interacts with and stabilizes bases of the 16S rRNA that are involved in tRNA selection in the A site and with the mRNA backbone. Located at the interface of the 30S and 50S subunits, it traverses the body of the 30S subunit contacting proteins on the other side and probably holding the rRNA structure together. The combined cluster of proteins S8, S12 and S17 appears to hold together the shoulder and platform of the 30S subunit. The protein is Small ribosomal subunit protein uS12 of Endomicrobium trichonymphae.